A 402-amino-acid chain; its full sequence is Arabinosyltransferase RRA1 (402 aa).

Topologically, residues 1 to 13 are cytoplasmic; sequence MAVRKEKVQPFRE. The chain crosses the membrane as a helical; Signal-anchor for type II membrane protein span at residues 14–34; sequence CGIAIAVLVGIFIGCVCTILI. At 35–402 the chain is on the lumenal side; the sequence is PNDFVNFRSS…DALDRFRDGS (368 aa). Residues 225 to 227 carry the DXD motif motif; sequence DVD. N253 carries an N-linked (GlcNAc...) asparagine glycan.

The protein belongs to the glycosyltransferase 77 family. In terms of tissue distribution, expressed in leaf meristem and at points of cauline leaf attachments on the primary stem. Expressed at low levels in siliques.

It is found in the golgi apparatus membrane. Plays a role in the arabinosylation of cell wall components. Involved in the arabinosylation of extensin proteins in root hair cells. Extensins are structural glycoproteins present in cell walls and its arabinosylation is important for root hair cell development. This is Arabinosyltransferase RRA1 from Arabidopsis thaliana (Mouse-ear cress).